A 585-amino-acid polypeptide reads, in one-letter code: Mitochondrial sodium/calcium exchanger protein (585 aa).

The signal sequence occupies residues methionine 1 to glycine 26. At alanine 27–leucine 95 the chain is on the extracellular side. N-linked (GlcNAc...) asparagine glycosylation occurs at asparagine 46. The helical transmembrane segment at leucine 96–valine 116 threads the bilayer. The Cytoplasmic portion of the chain corresponds to threonine 117–alanine 140. A helical transmembrane segment spans residues glycine 141–phenylalanine 161. Residues serine 162–glycine 168 lie on the Extracellular side of the membrane. A helical transmembrane segment spans residues leucine 169 to isoleucine 189. Over threonine 190–aspartate 205 the chain is Cytoplasmic. The helical transmembrane segment at isoleucine 206–threonine 226 threads the bilayer. Leucine 227 is a topological domain (extracellular). Residues valine 228–cysteine 247 traverse the membrane as a helical segment. Topologically, residues threonine 248–lysine 325 are cytoplasmic. Position 258 is a phosphoserine; by PKA (serine 258). Residues leucine 326–aspartate 346 traverse the membrane as a helical segment. At proline 347–cysteine 360 the chain is on the extracellular side. A helical membrane pass occupies residues leucine 361–isoleucine 381. The Cytoplasmic segment spans residues tyrosine 382 to glutamate 383. A helical membrane pass occupies residues isoleucine 384 to valine 404. At threonine 405–arginine 416 the chain is on the extracellular side. The chain crosses the membrane as a helical span at residues leucine 417–alanine 437. Topologically, residues threonine 438–arginine 445 are cytoplasmic. A helical membrane pass occupies residues serine 446–glycine 466. Residues asparagine 467–cysteine 491 lie on the Extracellular side of the membrane. A helical transmembrane segment spans residues phenylalanine 492–valine 512. Over arginine 513–glycine 525 the chain is Cytoplasmic. Residues leucine 526–valine 546 traverse the membrane as a helical segment. Over proline 547–leucine 559 the chain is Extracellular. The helical transmembrane segment at cysteine 560 to isoleucine 580 threads the bilayer. Residues histidine 581–aspartate 585 are Cytoplasmic-facing.

Belongs to the Ca(2+):cation antiporter (CaCA) (TC 2.A.19) family. SLC24A subfamily. Post-translationally, phosphorylation at Ser-258 by PKA prevents calcium overload. As to expression, widely expressed. Present at higher level in pancreas, stomach, skeletal muscle and skin (at protein level). Ubiquitously expressed.

Its subcellular location is the mitochondrion inner membrane. The enzyme catalyses Ca(2+)(in) + 3 Na(+)(out) = Ca(2+)(out) + 3 Na(+)(in). It catalyses the reaction 3 Li(+)(out) + Ca(2+)(in) = 3 Li(+)(in) + Ca(2+)(out). With respect to regulation, inhibited by the sodium/calcium exchanger inhibitor CGP-37157. Strongly inhibited by zinc. Functionally, mitochondrial sodium/calcium antiporter that mediates sodium-dependent calcium efflux from mitochondrion, by mediating the exchange of 3 sodium ions per 1 calcium ion. Plays a central role in mitochondrial calcium homeostasis by mediating mitochondrial calcium extrusion: calcium efflux is essential for mitochondrial function and cell survival, notably in cardiomyocytes. Regulates rates of glucose-dependent insulin secretion in pancreatic beta-cells during the first phase of insulin secretion: acts by mediating efflux of calcium from mitochondrion, thereby affecting cytoplasmic calcium responses. Required for store-operated Ca(2+) entry (SOCE) and Ca(2+) release-activated Ca(2+) (CRAC) channel regulation: sodium transport by SLC8B1 leads to promote calcium-shuttling that modulates mitochondrial redox status, thereby regulating SOCE activity. Involved in B-lymphocyte chemotaxis. Able to transport Ca(2+) in exchange of either Li(+) or Na(+), explaining how Li(+) catalyzes Ca(2+) exchange. In contrast to other members of the family its function is independent of K(+). The chain is Mitochondrial sodium/calcium exchanger protein from Rattus norvegicus (Rat).